The following is a 135-amino-acid chain: MTMFRSISMVMLLVALVTFISMVSSAASSPEADFVKKTISSHKIVIFSKSYCPYCKKAKSVFRELDQVPYVVELDEREDGWSIQTALGEIVGRRTVPQVFINGKHLGGSDDTVDAYESGELAKLLGVSGNKEAEL.

The region spanning 32-132 (ADFVKKTISS…KLLGVSGNKE (101 aa)) is the Glutaredoxin domain. C52 and C55 are oxidised to a cystine.

It belongs to the glutaredoxin family. CPYC subfamily.

It localises to the cytoplasm. Has a glutathione-disulfide oxidoreductase activity in the presence of NADPH and glutathione reductase. Reduces low molecular weight disulfides and proteins. In Arabidopsis thaliana (Mouse-ear cress), this protein is Glutaredoxin-C4 (GRXC4).